Consider the following 91-residue polypeptide: ATP synthase subunit c 2 (91 aa).

Transmembrane regions (helical) follow at residues 4-24 and 53-73; these read FSMCVLGAAIGMAIGTLGTGI and IGLAMIESLAIYALVICLIIL.

Belongs to the ATPase C chain family. As to quaternary structure, F-type ATPases have 2 components, F(1) - the catalytic core - and F(0) - the membrane proton channel. F(1) has five subunits: alpha(3), beta(3), gamma(1), delta(1), epsilon(1). F(0) has three main subunits: a(1), b(2) and c(10-14). The alpha and beta chains form an alternating ring which encloses part of the gamma chain. F(1) is attached to F(0) by a central stalk formed by the gamma and epsilon chains, while a peripheral stalk is formed by the delta and b chains.

The protein localises to the cell inner membrane. Functionally, f(1)F(0) ATP synthase produces ATP from ADP in the presence of a proton or sodium gradient. F-type ATPases consist of two structural domains, F(1) containing the extramembraneous catalytic core and F(0) containing the membrane proton channel, linked together by a central stalk and a peripheral stalk. During catalysis, ATP synthesis in the catalytic domain of F(1) is coupled via a rotary mechanism of the central stalk subunits to proton translocation. Its function is as follows. Key component of the F(0) channel; it plays a direct role in translocation across the membrane. A homomeric c-ring of between 10-14 subunits forms the central stalk rotor element with the F(1) delta and epsilon subunits. The sequence is that of ATP synthase subunit c 2 from Pelobacter propionicus (strain DSM 2379 / NBRC 103807 / OttBd1).